Consider the following 639-residue polypeptide: Chaperone protein DnaK (639 aa).

T198 carries the post-translational modification Phosphothreonine; by autocatalysis. The span at 603–618 (AKAQTQGGAQEGAAKQ) shows a compositional bias: low complexity. The tract at residues 603-639 (AKAQTQGGAQEGAAKQSNATADDVVDAEFEEVKDDKK) is disordered. Over residues 625 to 639 (DVVDAEFEEVKDDKK) the composition is skewed to acidic residues.

This sequence belongs to the heat shock protein 70 family.

Acts as a chaperone. This chain is Chaperone protein DnaK, found in Shewanella sp. (strain ANA-3).